Consider the following 369-residue polypeptide: Ubiquinone biosynthesis O-methyltransferase, mitochondrial (369 aa).

The transit peptide at 1–85 (MWSGRKLGSS…SFRYPWARLY (85 aa)) directs the protein to the mitochondrion. An S-adenosyl-L-methionine-binding site is contributed by arginine 124. 2 positions are modified to N6-acetyllysine: lysine 143 and lysine 149. S-adenosyl-L-methionine-binding residues include glycine 154 and aspartate 175. Lysine 196 carries the N6-acetyllysine modification. Serine 222 lines the S-adenosyl-L-methionine pocket. Residues glutamate 223, glutamate 226, and histidine 227 each coordinate Mg(2+).

Belongs to the class I-like SAM-binding methyltransferase superfamily. UbiG/COQ3 family. In terms of assembly, component of a multi-subunit COQ enzyme complex, composed of at least COQ3, COQ4, COQ5, COQ6, COQ7 and COQ9. It depends on Mg(2+) as a cofactor.

The protein localises to the mitochondrion inner membrane. It carries out the reaction 3,4-dihydroxy-5-(all-trans-decaprenyl)benzoate + S-adenosyl-L-methionine = 4-hydroxy-3-methoxy-5-(all-trans-decaprenyl)benzoate + S-adenosyl-L-homocysteine + H(+). The catalysed reaction is a 3-demethylubiquinone + S-adenosyl-L-methionine = a ubiquinone + S-adenosyl-L-homocysteine. It catalyses the reaction 3-demethylubiquinol-10 + S-adenosyl-L-methionine = ubiquinol-10 + S-adenosyl-L-homocysteine + H(+). Its pathway is cofactor biosynthesis; ubiquinone biosynthesis. O-methyltransferase required for two non-consecutive steps during ubiquinone biosynthesis. Catalyzes the 2 O-methylation of 3,4-dihydroxy-5-(all-trans-decaprenyl)benzoic acid into 4-hydroxy-3-methoxy-5-(all-trans-decaprenyl)benzoic acid. Also catalyzes the last step of ubiquinone biosynthesis by mediating methylation of 3-demethylubiquinone into ubiquinone. Also able to mediate the methylation of 3-demethylubiquinol-10 into ubiquinol-10. The polypeptide is Ubiquinone biosynthesis O-methyltransferase, mitochondrial (Homo sapiens (Human)).